Reading from the N-terminus, the 149-residue chain is Large ribosomal subunit protein bL9 (149 aa).

Belongs to the bacterial ribosomal protein bL9 family.

Functionally, binds to the 23S rRNA. In Thiobacillus denitrificans (strain ATCC 25259 / T1), this protein is Large ribosomal subunit protein bL9.